Reading from the N-terminus, the 545-residue chain is Cytochrome P450 monooxygenase sdnB (545 aa).

A glycan (N-linked (GlcNAc...) asparagine) is linked at N5. Residues 30-50 (SILALTPLQGIALFLCLFWGY) traverse the membrane as a helical segment. N276 carries N-linked (GlcNAc...) asparagine glycosylation. The helical transmembrane segment at 322 to 342 (LPILILIILVPAAHTTAMGIS) threads the bilayer. N-linked (GlcNAc...) asparagine glycans are attached at residues N393 and N476. Position 486 (C486) interacts with heme.

Belongs to the cytochrome P450 family. Heme serves as cofactor.

It localises to the membrane. Its pathway is antibiotic biosynthesis. Cytochrome P450 monooxygenase; part of the gene cluster that mediates the biosynthesis of sordarin and hypoxysordarin, glycoside antibiotics with a unique tetracyclic diterpene aglycone structure. First, the geranylgeranyl diphosphate synthase sdnC constructs GGDP from farnesyl diphosphate and isopentenyl diphosphate. The diterpene cyclase sdnA then catalyzes the cyclization of GGDP to afford cycloaraneosene. Cycloaraneosene is then hydroxylated four times by the putative cytochrome P450 monooxygenases sdnB, sdnE, sdnF and sdnH to give a hydroxylated cycloaraneosene derivative such as cycloaraneosene-8,9,13,19-tetraol. Although the order of the hydroxylations is unclear, at least C8, C9 and C13 of the cycloaraneosene skeleton are hydroxylated before the sordaricin formation. Dehydration of the 13-hydroxy group of the hydroxylated cycloaraneosene derivative might be catalyzed by an unassigned hypothetical protein such as sdnG and sdnP to construct the cyclopentadiene moiety. The FAD-dependent oxidoreductase sdnN is proposed to catalyze the oxidation at C9 of the hydroxylated cycloaraneosene derivative and also catalyze the Baeyer-Villiger oxidation to give the lactone intermediate. The presumed lactone intermediate would be hydrolyzed to give an acrolein moiety and a carboxylate moiety. Then, [4+2]cycloaddition would occur between the acrolein moiety and the cyclopentadiene moiety to give sordaricin. SdnN might also be involved in the [4+2]cycloaddition after the hypothesized oxidation to accommodate the oxidized product and prompt the [4+2]cycloaddition. GDP-6-deoxy-D-altrose may be biosynthesized from GDP-D-mannose by the putative GDP-mannose-4,6-dehydratase sdnI and the short-chain dehydrogenase sdnK. The glycosyltransferase sdnJ catalyzes the attachment of 6-deoxy-D-altrose onto the 19-hydroxy group of sordaricin to give 4'-O-demethylsordarin. The methyltransferase sdnD would complete the biosynthesis of sordarin. Sordarin can be further modified into hypoxysordarin. The unique acyl chain at the 3'-hydroxy group of hypoxysordarin would be constructed by an iterative type I PKS sdnO and the trans-acting polyketide methyltransferase sdnL. SdnL would be responsible for the introduction of an alpha-methyl group of the polyketide chain. Alternatively, the beta-lactamase-like protein sdnR might be responsible for the cleavage and transfer of the polyketide chain from the PKS sdnO to sordarin. Two putative cytochrome P450 monooxygenases, sdnQ and sdnT, might catalyze the epoxidations of the polyketide chain to complete the biosynthesis of hypoxysordarin. Transcriptional regulators sdnM and sdnS are presumably encoded for the transcriptional regulation of the expression of the sdn gene cluster. The sequence is that of Cytochrome P450 monooxygenase sdnB from Sordaria araneosa (Pleurage araneosa).